Here is a 155-residue protein sequence, read N- to C-terminus: Cyanate hydratase (155 aa).

Residues arginine 92, glutamate 95, and serine 118 contribute to the active site.

It belongs to the cyanase family.

The catalysed reaction is cyanate + hydrogencarbonate + 3 H(+) = NH4(+) + 2 CO2. Catalyzes the reaction of cyanate with bicarbonate to produce ammonia and carbon dioxide. The polypeptide is Cyanate hydratase (Mycobacterium avium (strain 104)).